We begin with the raw amino-acid sequence, 509 residues long: Lysine--tRNA ligase (509 aa).

2 residues coordinate Mg(2+): glutamate 418 and glutamate 425.

This sequence belongs to the class-II aminoacyl-tRNA synthetase family. Homodimer. It depends on Mg(2+) as a cofactor.

The protein resides in the cytoplasm. It carries out the reaction tRNA(Lys) + L-lysine + ATP = L-lysyl-tRNA(Lys) + AMP + diphosphate. The protein is Lysine--tRNA ligase of Acinetobacter baumannii (strain ATCC 17978 / DSM 105126 / CIP 53.77 / LMG 1025 / NCDC KC755 / 5377).